A 255-amino-acid polypeptide reads, in one-letter code: Large ribosomal subunit protein eL8 (255 aa).

Residues 1-16 (MPKAPKKITKPKKAEK) show a composition bias toward basic residues. Positions 1–28 (MPKAPKKITKPKKAEKKKNPLFQAKPRS) are disordered.

The protein belongs to the eukaryotic ribosomal protein eL8 family.

This chain is Large ribosomal subunit protein eL8 (RPL7A), found in Tetrahymena thermophila.